Reading from the N-terminus, the 443-residue chain is Phosphoglucosamine mutase (443 aa).

The Phosphoserine intermediate role is filled by Ser100. Positions 100, 239, 241, and 243 each coordinate Mg(2+). Position 100 is a phosphoserine (Ser100).

The protein belongs to the phosphohexose mutase family. Mg(2+) is required as a cofactor. In terms of processing, activated by phosphorylation.

The enzyme catalyses alpha-D-glucosamine 1-phosphate = D-glucosamine 6-phosphate. Its function is as follows. Catalyzes the conversion of glucosamine-6-phosphate to glucosamine-1-phosphate. This Shewanella sediminis (strain HAW-EB3) protein is Phosphoglucosamine mutase.